The following is a 343-amino-acid chain: Trace amine-associated receptor 3 (343 aa).

Over 1-35 (MDLIYIPEDLSSCPKFGNKSCPPTNRSFRVRMIMY) the chain is Extracellular. Residues Asn18 and Asn25 are each glycosylated (N-linked (GlcNAc...) asparagine). 2 disulfide bridges follow: Cys21–Cys185 and Cys104–Cys189. A helical membrane pass occupies residues 36–56 (LFMTGAMVITIFGNLVIIISI). Residues 57–68 (SHFKQLHSPTNF) are Cytoplasmic-facing. Residues 69–89 (LILSMATTDFLLGFVIMPYSM) traverse the membrane as a helical segment. The Extracellular segment spans residues 90-150 (VRSVESCWYF…TTMTVSMIKR (61 aa)). A helical membrane pass occupies residues 151 to 168 (LLAFCWAAPALFSFGLVL). Residues 169-172 (SEAN) are Cytoplasmic-facing. The interval 173-186 (VSGMQSYEILVACF) is extracellular Loop 2 (ECL2). Residues 173 to 193 (VSGMQSYEILVACFNFCALTF) form a helical membrane-spanning segment. Over 194 to 198 (NKFWG) the chain is Extracellular. Residues 199–223 (TILFTTCFFTPGSIMVGIYGKIFIV) form a helical membrane-spanning segment. The Cytoplasmic segment spans residues 224–257 (SRRHARALSDMPANTKGAVGKNLSKKKDRKAAKT). A helical transmembrane segment spans residues 258 to 278 (LGIVMGVFLACWLPCFLAVLI). Over 279–287 (DPYLDYSTP) the chain is Extracellular. Residues 288–308 (IIVLDLLVWLGYFNSTCNPLI) form a helical membrane-spanning segment. Over 309–343 (HGFFYPWFRKALQFIVSGKIFRSNSDTANLFPEAH) the chain is Cytoplasmic.

Belongs to the G-protein coupled receptor 1 family. As to expression, specifically expressed in neurons of the olfactory epithelium.

The protein resides in the cell membrane. Olfactory receptor activated by several primary trace amines, including isoamylamine. Activated by isoamylamine and cyclohexylamine, but not to the corresponding alcohols, isoamylalcohol and cyclohexanol. This receptor is probably mediated by the G(s)-class of G-proteins which activate adenylate cyclase. This chain is Trace amine-associated receptor 3, found in Mus musculus (Mouse).